The chain runs to 315 residues: Lipoyl synthase (315 aa).

The tract at residues 1–33 (MADMPPVLRHPEKAHRPDQPQPKKPDWIRVKAP) is disordered. Residues 9 to 29 (RHPEKAHRPDQPQPKKPDWIR) show a composition bias toward basic and acidic residues. 7 residues coordinate [4Fe-4S] cluster: cysteine 54, cysteine 59, cysteine 65, cysteine 80, cysteine 84, cysteine 87, and serine 294. Positions 66–283 (WSQGHATMMI…EKAAYGKGFL (218 aa)) constitute a Radical SAM core domain.

It belongs to the radical SAM superfamily. Lipoyl synthase family. It depends on [4Fe-4S] cluster as a cofactor.

It is found in the cytoplasm. It catalyses the reaction [[Fe-S] cluster scaffold protein carrying a second [4Fe-4S](2+) cluster] + N(6)-octanoyl-L-lysyl-[protein] + 2 oxidized [2Fe-2S]-[ferredoxin] + 2 S-adenosyl-L-methionine + 4 H(+) = [[Fe-S] cluster scaffold protein] + N(6)-[(R)-dihydrolipoyl]-L-lysyl-[protein] + 4 Fe(3+) + 2 hydrogen sulfide + 2 5'-deoxyadenosine + 2 L-methionine + 2 reduced [2Fe-2S]-[ferredoxin]. Its pathway is protein modification; protein lipoylation via endogenous pathway; protein N(6)-(lipoyl)lysine from octanoyl-[acyl-carrier-protein]: step 2/2. In terms of biological role, catalyzes the radical-mediated insertion of two sulfur atoms into the C-6 and C-8 positions of the octanoyl moiety bound to the lipoyl domains of lipoate-dependent enzymes, thereby converting the octanoylated domains into lipoylated derivatives. The protein is Lipoyl synthase of Paracoccus denitrificans (strain Pd 1222).